The sequence spans 102 residues: Large ribosomal subunit protein bL21 (102 aa).

The protein belongs to the bacterial ribosomal protein bL21 family. As to quaternary structure, part of the 50S ribosomal subunit. Contacts protein L20.

In terms of biological role, this protein binds to 23S rRNA in the presence of protein L20. The sequence is that of Large ribosomal subunit protein bL21 from Limosilactobacillus fermentum (strain NBRC 3956 / LMG 18251) (Lactobacillus fermentum).